Consider the following 217-residue polypeptide: GTP cyclohydrolase 1 (217 aa).

Residues cysteine 109, histidine 112, and cysteine 180 each contribute to the Zn(2+) site.

The protein belongs to the GTP cyclohydrolase I family. In terms of assembly, toroid-shaped homodecamer, composed of two pentamers of five dimers.

It carries out the reaction GTP + H2O = 7,8-dihydroneopterin 3'-triphosphate + formate + H(+). Its pathway is cofactor biosynthesis; 7,8-dihydroneopterin triphosphate biosynthesis; 7,8-dihydroneopterin triphosphate from GTP: step 1/1. The chain is GTP cyclohydrolase 1 from Vibrio cholerae serotype O1 (strain ATCC 39315 / El Tor Inaba N16961).